The following is a 139-amino-acid chain: Ribonuclease P protein component (139 aa).

A disordered region spans residues 120–139; sequence KATTGGECTPKSEKCVTAPR.

Belongs to the RnpA family. Consists of a catalytic RNA component (M1 or rnpB) and a protein subunit.

It catalyses the reaction Endonucleolytic cleavage of RNA, removing 5'-extranucleotides from tRNA precursor.. In terms of biological role, RNaseP catalyzes the removal of the 5'-leader sequence from pre-tRNA to produce the mature 5'-terminus. It can also cleave other RNA substrates such as 4.5S RNA. The protein component plays an auxiliary but essential role in vivo by binding to the 5'-leader sequence and broadening the substrate specificity of the ribozyme. The chain is Ribonuclease P protein component from Chlamydia pneumoniae (Chlamydophila pneumoniae).